A 130-amino-acid chain; its full sequence is Protein UL145 (130 aa).

As to quaternary structure, interacts with host DDB1; this interaction promotes STAT2 degradation.

Functionally, plays a role in the inhibition of host innate immunity by exploiting host DDB1-cullin RING ubiquitin ligases (CRLs). Mechanistically, recruits host DDB1 via a DCAF-like interaction motif to antagonize IFN signaling by STAT2 degradation. The polypeptide is Protein UL145 (UL145) (Homo sapiens (Human)).